The chain runs to 212 residues: Proteasome subunit beta 2 (212 aa).

Positions 1-15 (MLHHPGTGQLRALKG) are cleaved as a propeptide — removed in mature form; by autocatalysis. The active-site Nucleophile is Thr-16.

Belongs to the peptidase T1B family. As to quaternary structure, the 20S proteasome core is composed of 14 alpha and 14 beta subunits that assemble into four stacked heptameric rings, resulting in a barrel-shaped structure. The two inner rings, each composed of seven catalytic beta subunits, are sandwiched by two outer rings, each composed of seven alpha subunits. The catalytic chamber with the active sites is on the inside of the barrel. Has a gated structure, the ends of the cylinder being occluded by the N-termini of the alpha-subunits. Is capped at one or both ends by the proteasome regulatory ATPase, PAN.

Its subcellular location is the cytoplasm. It catalyses the reaction Cleavage of peptide bonds with very broad specificity.. The formation of the proteasomal ATPase PAN-20S proteasome complex, via the docking of the C-termini of PAN into the intersubunit pockets in the alpha-rings, triggers opening of the gate for substrate entry. Interconversion between the open-gate and close-gate conformations leads to a dynamic regulation of the 20S proteasome proteolysis activity. Component of the proteasome core, a large protease complex with broad specificity involved in protein degradation. In Hyperthermus butylicus (strain DSM 5456 / JCM 9403 / PLM1-5), this protein is Proteasome subunit beta 2.